Consider the following 150-residue polypeptide: Transcriptional repressor NrdR (150 aa).

A zinc finger spans residues 3–33 (CPYCTGESAVIDTRELDNGETIRRRRRCKHC). The ATP-cone domain occupies 48–138 (VMVVKKNGDR…VYRSFSDLGK (91 aa)).

It belongs to the NrdR family. Zn(2+) serves as cofactor.

Negatively regulates transcription of bacterial ribonucleotide reductase nrd genes and operons by binding to NrdR-boxes. The protein is Transcriptional repressor NrdR of Herpetosiphon aurantiacus (strain ATCC 23779 / DSM 785 / 114-95).